The following is a 590-amino-acid chain: Potassium-transporting ATPase potassium-binding subunit (590 aa).

The next 4 membrane-spanning stretches (helical) occupy residues 3–23, 63–83, 134–154, and 177–197; these read AFLL…RPLG, HYAL…YALQ, GLAV…IALI, and LYVL…QGAI. Positions 217–244 are disordered; it reads PKTDAQGNPIKDAQGNPVTEKATTQKQT. A run of 8 helical transmembrane segments spans residues 284–304, 312–332, 359–379, 388–408, 411–431, 450–470, 515–535, and 558–578; these read FVQM…FGAM, WAVL…EMWA, FGVV…CGAV, ALGG…FGGV, GLYG…LMIG, SIAI…AVLA, VALG…VLAM, and LFVV…YIPA.

It belongs to the KdpA family. In terms of assembly, the system is composed of three essential subunits: KdpA, KdpB and KdpC.

The protein localises to the cell inner membrane. Functionally, part of the high-affinity ATP-driven potassium transport (or Kdp) system, which catalyzes the hydrolysis of ATP coupled with the electrogenic transport of potassium into the cytoplasm. This subunit binds the periplasmic potassium ions and delivers the ions to the membrane domain of KdpB through an intramembrane tunnel. This Ralstonia nicotianae (strain ATCC BAA-1114 / GMI1000) (Ralstonia solanacearum) protein is Potassium-transporting ATPase potassium-binding subunit.